A 247-amino-acid chain; its full sequence is Ribonuclease PH (247 aa).

Residues arginine 87 and 125–127 each bind phosphate; that span reads GTR.

It belongs to the RNase PH family. As to quaternary structure, homohexameric ring arranged as a trimer of dimers.

The catalysed reaction is tRNA(n+1) + phosphate = tRNA(n) + a ribonucleoside 5'-diphosphate. In terms of biological role, phosphorolytic 3'-5' exoribonuclease that plays an important role in tRNA 3'-end maturation. Removes nucleotide residues following the 3'-CCA terminus of tRNAs; can also add nucleotides to the ends of RNA molecules by using nucleoside diphosphates as substrates, but this may not be physiologically important. Probably plays a role in initiation of 16S rRNA degradation (leading to ribosome degradation) during starvation. The sequence is that of Ribonuclease PH from Frankia casuarinae (strain DSM 45818 / CECT 9043 / HFP020203 / CcI3).